The chain runs to 385 residues: S-adenosylmethionine synthase (385 aa).

His16 provides a ligand contact to ATP. Residue Asp18 participates in Mg(2+) binding. K(+) is bound at residue Glu44. 2 residues coordinate L-methionine: Glu57 and Gln100. A flexible loop region spans residues 100–110; that stretch reads QSPDINQGVDR. ATP contacts are provided by residues 164–166, 230–231, Asp239, 245–246, Ala262, and Lys266; these read DGK, KF, and RK. L-methionine is bound at residue Asp239. Lys270 serves as a coordination point for L-methionine.

Belongs to the AdoMet synthase family. Homotetramer; dimer of dimers. Mg(2+) serves as cofactor. The cofactor is K(+).

It is found in the cytoplasm. It carries out the reaction L-methionine + ATP + H2O = S-adenosyl-L-methionine + phosphate + diphosphate. It participates in amino-acid biosynthesis; S-adenosyl-L-methionine biosynthesis; S-adenosyl-L-methionine from L-methionine: step 1/1. In terms of biological role, catalyzes the formation of S-adenosylmethionine (AdoMet) from methionine and ATP. The overall synthetic reaction is composed of two sequential steps, AdoMet formation and the subsequent tripolyphosphate hydrolysis which occurs prior to release of AdoMet from the enzyme. The sequence is that of S-adenosylmethionine synthase from Helicobacter pylori (strain P12).